The chain runs to 415 residues: Imidazolonepropionase (415 aa).

The Fe(3+) site is built by H74 and H76. 2 residues coordinate Zn(2+): H74 and H76. Positions 83, 146, and 179 each coordinate 4-imidazolone-5-propanoate. Y146 serves as a coordination point for N-formimidoyl-L-glutamate. H244 lines the Fe(3+) pocket. H244 provides a ligand contact to Zn(2+). Q247 lines the 4-imidazolone-5-propanoate pocket. Residue D319 coordinates Fe(3+). D319 is a binding site for Zn(2+). Residues N321 and G323 each coordinate N-formimidoyl-L-glutamate. T324 lines the 4-imidazolone-5-propanoate pocket.

This sequence belongs to the metallo-dependent hydrolases superfamily. HutI family. It depends on Zn(2+) as a cofactor. Fe(3+) is required as a cofactor.

It localises to the cytoplasm. It carries out the reaction 4-imidazolone-5-propanoate + H2O = N-formimidoyl-L-glutamate. It functions in the pathway amino-acid degradation; L-histidine degradation into L-glutamate; N-formimidoyl-L-glutamate from L-histidine: step 3/3. Its function is as follows. Catalyzes the hydrolytic cleavage of the carbon-nitrogen bond in imidazolone-5-propanoate to yield N-formimidoyl-L-glutamate. It is the third step in the universal histidine degradation pathway. This Cupriavidus metallidurans (strain ATCC 43123 / DSM 2839 / NBRC 102507 / CH34) (Ralstonia metallidurans) protein is Imidazolonepropionase.